Consider the following 445-residue polypeptide: Histamine H3 receptor (445 aa).

At 1–39 (MERAPPDGPLNASGALAGEAAAAGGARGFSAAWTAVLAA) the chain is on the extracellular side. N-linked (GlcNAc...) asparagine glycosylation occurs at Asn11. The chain crosses the membrane as a helical span at residues 40–60 (LMALLIVATVLGNALVMLAFV). At 61–70 (ADSSLRTQNN) the chain is on the cytoplasmic side. Residues 71 to 91 (FFLLNLAISDFLVGAFCIPLY) traverse the membrane as a helical segment. The Extracellular portion of the chain corresponds to 92–108 (VPYVLTGRWTFGRGLCK). An intrachain disulfide couples Cys107 to Cys188. The helical transmembrane segment at 109–129 (LWLVVDYLLCTSSAFNIVLIS) threads the bilayer. Residues 130–156 (YDRFLSVTRAVSYRAQQGDTRRAVRKM) are Cytoplasmic-facing. A helical membrane pass occupies residues 157-177 (LLVWVLAFLLYGPAILSWEYL). The Extracellular portion of the chain corresponds to 178–196 (SGGSSIPEGHCYAEFFYNW). The chain crosses the membrane as a helical span at residues 197 to 217 (YFLITASTLEFFTPFLSVTFF). Residues 218–359 (NLSIYLNIQR…LSRDRKVAKS (142 aa)) are Cytoplasmic-facing. 2 disordered regions span residues 237 to 260 (REAAGPEPPPEAQPSPPPPPGCWG) and 288 to 336 (EATL…LEKR). Pro residues predominate over residues 242–257 (PEPPPEAQPSPPPPPG). The segment covering 290–299 (TLGGGGGGGS) has biased composition (gly residues). Positions 300 to 312 (VASPTSSSGSSSR) are enriched in low complexity. Residues 360 to 380 (LAVIVSIFGLCWAPYTLLMII) traverse the membrane as a helical segment. Over 381 to 395 (RAACHGHCVPDYWYE) the chain is Extracellular. Residues 396-416 (TSFWLLWANSAVNPVLYPLCH) traverse the membrane as a helical segment. The Cytoplasmic portion of the chain corresponds to 417-445 (HSFRRAFTKLLCPQKLKIQPHSSLEHCWK). Phosphoserine is present on Ser439.

This sequence belongs to the G-protein coupled receptor 1 family. In terms of tissue distribution, expressed predominantly in the CNS, with the greatest expression in the thalamus and caudate nucleus. The various isoforms are mainly coexpressed in brain, but their relative expression level varies in a region-specific manner. Isoform 3 and isoform 7 are highly expressed in the thalamus, caudate nucleus and cerebellum while isoform 5 and isoform 6 show a poor expression. Isoform 5 and isoform 6 show a high expression in the amygdala, substantia nigra, cerebral cortex and hypothalamus. Isoform 7 is not found in hypothalamus or substantia nigra.

It is found in the cell membrane. The H3 subclass of histamine receptors could mediate the histamine signals in CNS and peripheral nervous system. Signals through the inhibition of adenylate cyclase and displays high constitutive activity (spontaneous activity in the absence of agonist). Agonist stimulation of isoform 3 neither modified adenylate cyclase activity nor induced intracellular calcium mobilization. The chain is Histamine H3 receptor (HRH3) from Homo sapiens (Human).